A 242-amino-acid chain; its full sequence is Segregation and condensation protein A (242 aa).

This sequence belongs to the ScpA family. Component of a cohesin-like complex composed of ScpA, ScpB and the Smc homodimer, in which ScpA and ScpB bind to the head domain of Smc. The presence of the three proteins is required for the association of the complex with DNA.

Its subcellular location is the cytoplasm. In terms of biological role, participates in chromosomal partition during cell division. May act via the formation of a condensin-like complex containing Smc and ScpB that pull DNA away from mid-cell into both cell halves. This is Segregation and condensation protein A from Streptococcus pneumoniae (strain Taiwan19F-14).